Here is a 364-residue protein sequence, read N- to C-terminus: Peroxisomal membrane protein PEX16 (364 aa).

Ser-200 carries the phosphoserine modification.

The protein belongs to the peroxin-16 family.

The protein localises to the peroxisome membrane. Involved in the biogenesis of peroxisomes. In Schizosaccharomyces pombe (strain 972 / ATCC 24843) (Fission yeast), this protein is Peroxisomal membrane protein PEX16 (pex16).